A 58-amino-acid chain; its full sequence is MFTVFLLVVLATTVVSFTSDRASDGRKDAASGLIALTMKGCCSYPPCFATNPDCGRRR.

The first 16 residues, 1 to 16 (MFTVFLLVVLATTVVS), serve as a signal peptide directing secretion. A propeptide spanning residues 17–39 (FTSDRASDGRKDAASGLIALTMK) is cleaved from the precursor. Cystine bridges form between Cys41–Cys47 and Cys42–Cys54. The residue at position 54 (Cys54) is a Cysteine amide.

As to expression, expressed by the venom duct.

It is found in the secreted. In terms of biological role, alpha-conotoxins act on postsynaptic membranes, they bind to the nicotinic acetylcholine receptors (nAChR) and thus inhibit them. This toxin blocks mammalian nAChR alpha-3-beta-4/CHRNA3-CHRNB4 subunits. Also exhibits inhibition of D.melanogaster alpha-7/CHRNA7 nAChRs. The sequence is that of Alpha-conotoxin AuIB from Conus aulicus (Princely cone).